The chain runs to 200 residues: 3-isopropylmalate dehydratase small subunit (200 aa).

Belongs to the LeuD family. LeuD type 1 subfamily. As to quaternary structure, heterodimer of LeuC and LeuD.

It catalyses the reaction (2R,3S)-3-isopropylmalate = (2S)-2-isopropylmalate. The protein operates within amino-acid biosynthesis; L-leucine biosynthesis; L-leucine from 3-methyl-2-oxobutanoate: step 2/4. In terms of biological role, catalyzes the isomerization between 2-isopropylmalate and 3-isopropylmalate, via the formation of 2-isopropylmaleate. In Aliivibrio salmonicida (strain LFI1238) (Vibrio salmonicida (strain LFI1238)), this protein is 3-isopropylmalate dehydratase small subunit.